Here is a 176-residue protein sequence, read N- to C-terminus: Ribosome maturation factor RimM (176 aa).

The region spanning 104-176 is the PRC barrel domain; that stretch reads EDEYYFYEIL…KIIAKEMEWI (73 aa).

It belongs to the RimM family. Binds ribosomal protein uS19.

The protein resides in the cytoplasm. In terms of biological role, an accessory protein needed during the final step in the assembly of 30S ribosomal subunit, possibly for assembly of the head region. Essential for efficient processing of 16S rRNA. May be needed both before and after RbfA during the maturation of 16S rRNA. It has affinity for free ribosomal 30S subunits but not for 70S ribosomes. The sequence is that of Ribosome maturation factor RimM from Thermotoga maritima (strain ATCC 43589 / DSM 3109 / JCM 10099 / NBRC 100826 / MSB8).